The following is a 195-amino-acid chain: Kiwa protein KwaA (195 aa).

A run of 3 helical transmembrane segments spans residues 10–30, 46–66, and 117–137; these read GLYI…TAKI, LVLT…SIYF, and IAYL…DKYY.

Its subcellular location is the cell inner membrane. In terms of biological role, component of antiviral defense system Kiwa, composed of KwaA and KwaB. Expression of Kiwa in E.coli (strain MG1655) confers resistance to phages lambda and SECphi18. The polypeptide is Kiwa protein KwaA (Escherichia coli O55:H7 (strain RM12579 / EPEC)).